Here is a 673-residue protein sequence, read N- to C-terminus: UvrABC system protein B (673 aa).

Residues 26–414 (EGLEDGLAHQ…GDEVVDQVVR (389 aa)) enclose the Helicase ATP-binding domain. ATP is bound at residue 39–46 (GVTGSGKT). The short motif at 92 to 115 (YYDYYQPEAYVPSSDTFIEKDASI) is the Beta-hairpin element. One can recognise a Helicase C-terminal domain in the interval 431-597 (QVDDLLSEIR…GLNKKVVDIL (167 aa)). Residues 633–668 (QQKIHELEGQMMQHAQNLEFEEAAQIRDQLHQLREL) enclose the UVR domain.

It belongs to the UvrB family. As to quaternary structure, forms a heterotetramer with UvrA during the search for lesions. Interacts with UvrC in an incision complex.

It localises to the cytoplasm. Functionally, the UvrABC repair system catalyzes the recognition and processing of DNA lesions. A damage recognition complex composed of 2 UvrA and 2 UvrB subunits scans DNA for abnormalities. Upon binding of the UvrA(2)B(2) complex to a putative damaged site, the DNA wraps around one UvrB monomer. DNA wrap is dependent on ATP binding by UvrB and probably causes local melting of the DNA helix, facilitating insertion of UvrB beta-hairpin between the DNA strands. Then UvrB probes one DNA strand for the presence of a lesion. If a lesion is found the UvrA subunits dissociate and the UvrB-DNA preincision complex is formed. This complex is subsequently bound by UvrC and the second UvrB is released. If no lesion is found, the DNA wraps around the other UvrB subunit that will check the other stand for damage. The protein is UvrABC system protein B of Salmonella paratyphi A (strain ATCC 9150 / SARB42).